We begin with the raw amino-acid sequence, 67 residues long: Conotoxin LiC33 (67 aa).

Positions 1-22 (MRCVPVFIILLLLSPSAPSVDA) are cleaved as a signal peptide. A propeptide spanning residues 23 to 48 (HPKTKDDVPLASFHDDAKRTLQRLWI) is cleaved from the precursor. Phenylalanine amide is present on Phe-63. The propeptide occupies 65 to 67 (KGK).

This sequence belongs to the conotoxin T superfamily. Contains 2 disulfide bonds that can be either 'C1-C3, C2-C4' or 'C1-C4, C2-C3', since these disulfide connectivities have been observed for conotoxins with cysteine framework V (for examples, see AC P0DQQ7 and AC P81755). As to expression, expressed by the venom duct.

The protein resides in the secreted. The polypeptide is Conotoxin LiC33 (Conus lividus (Livid cone)).